A 375-amino-acid polypeptide reads, in one-letter code: Ketohexokinase (375 aa).

Residue aspartate 319 participates in beta-D-fructose binding.

The protein belongs to the carbohydrate kinase PfkB family. In terms of assembly, homodimer.

The enzyme catalyses beta-D-fructose + ATP = beta-D-fructose 1-phosphate + ADP + H(+). Its pathway is carbohydrate metabolism; fructose metabolism. With respect to regulation, activated in the presence of 0.5 M KCl. 85% activity at 3.5 M KCl. 60% activity without KCl. Catalyzes the ATP-dependent phosphorylation of the ketose sugar fructose to fructose-1-phosphate. Does not produce fructose-6-phosphate. The sugars D-glucose, D-galactose, L-rhamnose, D-xylose, L-arabinose and D-ribose are not substrates of this enzyme. The chain is Ketohexokinase from Haloferax volcanii (strain ATCC 29605 / DSM 3757 / JCM 8879 / NBRC 14742 / NCIMB 2012 / VKM B-1768 / DS2) (Halobacterium volcanii).